Here is a 97-residue protein sequence, read N- to C-terminus: Large ribosomal subunit protein bL28 (97 aa).

The protein belongs to the bacterial ribosomal protein bL28 family.

This Rickettsia typhi (strain ATCC VR-144 / Wilmington) protein is Large ribosomal subunit protein bL28.